Consider the following 218-residue polypeptide: Probable transaldolase (218 aa).

Residue lysine 87 is the Schiff-base intermediate with substrate of the active site.

Belongs to the transaldolase family. Type 3B subfamily.

The protein resides in the cytoplasm. It carries out the reaction D-sedoheptulose 7-phosphate + D-glyceraldehyde 3-phosphate = D-erythrose 4-phosphate + beta-D-fructose 6-phosphate. Its pathway is carbohydrate degradation; pentose phosphate pathway; D-glyceraldehyde 3-phosphate and beta-D-fructose 6-phosphate from D-ribose 5-phosphate and D-xylulose 5-phosphate (non-oxidative stage): step 2/3. In terms of biological role, transaldolase is important for the balance of metabolites in the pentose-phosphate pathway. The protein is Probable transaldolase of Bacteroides fragilis (strain ATCC 25285 / DSM 2151 / CCUG 4856 / JCM 11019 / LMG 10263 / NCTC 9343 / Onslow / VPI 2553 / EN-2).